The chain runs to 137 residues: Type III secretion protein HrcQb (137 aa).

Residues 1-22 show a composition bias toward acidic residues; that stretch reads MSTEDLYQDDVESLEDYDDETA. Positions 1–67 are disordered; sequence MSTEDLYQDD…EQQAPSGLDS (67 aa). Positions 23–33 are enriched in basic and acidic residues; it reads EQEHEHEHEQQ. Residues 36–58 show a composition bias toward acidic residues; it reads EPDDESEYAEAEPDDDEQEEQEE.

Belongs to the FliN/MopA/SpaO family. Homotetramer. The four monomers assemble into two tightly bound homodimers. Interacts with HrcQa.

Its subcellular location is the cytoplasm. Functionally, component of the type III secretion system, which is required for effector protein delivery, parasitism, and pathogenicity. Probably participates in the formation of a C-ring-like assembly along with HrcQa. This chain is Type III secretion protein HrcQb (hrcQb), found in Pseudomonas syringae pv. tomato (strain ATCC BAA-871 / DC3000).